The primary structure comprises 160 residues: MSDQYKRTYPISWDQLHRDSKALAWRLLDKDFFKGIIAITRGGMVPAAIIARELDIHLIDTICISSYDWKEKKGEADILKGFDGDGEGWLLIDDLVDTGRTAEVVKNLIPKAHFATVYAKPSGRPLVDTFVTEVSQDTWILFPWDTESQFAAPLIGREQR.

5-phospho-alpha-D-ribose 1-diphosphate contacts are provided by residues 41–42 (RG) and 93–101 (DDLVDTGRT). A Mg(2+)-binding site is contributed by aspartate 94. Residues aspartate 97 and isoleucine 140 each coordinate guanine. Xanthine-binding residues include aspartate 97 and isoleucine 140. GMP contacts are provided by residues 97–101 (DTGRT) and 139–140 (WI).

The protein belongs to the purine/pyrimidine phosphoribosyltransferase family. XGPT subfamily. As to quaternary structure, homotetramer. Requires Mg(2+) as cofactor.

The protein localises to the cell inner membrane. It catalyses the reaction GMP + diphosphate = guanine + 5-phospho-alpha-D-ribose 1-diphosphate. The enzyme catalyses XMP + diphosphate = xanthine + 5-phospho-alpha-D-ribose 1-diphosphate. It carries out the reaction IMP + diphosphate = hypoxanthine + 5-phospho-alpha-D-ribose 1-diphosphate. It functions in the pathway purine metabolism; GMP biosynthesis via salvage pathway; GMP from guanine: step 1/1. It participates in purine metabolism; XMP biosynthesis via salvage pathway; XMP from xanthine: step 1/1. Purine salvage pathway enzyme that catalyzes the transfer of the ribosyl-5-phosphate group from 5-phospho-alpha-D-ribose 1-diphosphate (PRPP) to the N9 position of the 6-oxopurines guanine and xanthine to form the corresponding ribonucleotides GMP (guanosine 5'-monophosphate) and XMP (xanthosine 5'-monophosphate), with the release of PPi. To a lesser extent, also acts on hypoxanthine. This is Xanthine-guanine phosphoribosyltransferase from Desulfotalea psychrophila (strain LSv54 / DSM 12343).